Reading from the N-terminus, the 221-residue chain is Fanconi anemia core complex-associated protein 24 (221 aa).

In terms of assembly, belongs to the multisubunit FA complex composed of FANCA, FANCB, FANCC, FANCE, FANCF, FANCG, FANCL/PHF9, FANCM and FAAP24. Interacts with FANCM.

It is found in the nucleus. Functionally, plays a role in DNA repair through recruitment of the FA core complex to damaged DNA. Regulates FANCD2 monoubiquitination upon DNA damage. Induces chromosomal instability as well as hypersensitivity to DNA cross-linking agents, when repressed. Targets FANCM/FAAP24 complex to the DNA, preferentially to single strand DNA. This Mus musculus (Mouse) protein is Fanconi anemia core complex-associated protein 24.